The following is a 152-amino-acid chain: Large ribosomal subunit protein uL30 (152 aa).

It belongs to the universal ribosomal protein uL30 family. As to quaternary structure, part of the 50S ribosomal subunit.

This is Large ribosomal subunit protein uL30 from Archaeoglobus fulgidus (strain ATCC 49558 / DSM 4304 / JCM 9628 / NBRC 100126 / VC-16).